The sequence spans 634 residues: Proline and serine-rich protein 3 (634 aa).

Disordered regions lie at residues 1–69 (MFPK…LIDN), 81–142 (FRQA…TSLA), 185–242 (DASS…ATLK), 368–455 (VPPT…FEGP), and 472–534 (FPDS…TAPK). The span at 15-24 (RTGATRSQRP) shows a compositional bias: polar residues. Composition is skewed to low complexity over residues 40 to 56 (ESWP…STTE), 128 to 140 (VTGP…SSTS), and 185 to 202 (DASS…SPSS). A compositionally biased stretch (polar residues) spans 203–215 (VTFNPDSNKSSNP). A compositionally biased stretch (low complexity) spans 368–377 (VPPTSTSTTP). A compositionally biased stretch (pro residues) spans 378–399 (APTPTPQVCIPGPPTSAPPPCA). The span at 436–448 (VSTSSHQKTTVPD) shows a compositional bias: polar residues. The span at 503 to 515 (PESRRGSKTESRK) shows a compositional bias: basic and acidic residues. Residue Ser588 is modified to Phosphoserine.

It localises to the cytoplasm. Its subcellular location is the cytoskeleton. The protein localises to the microtubule organizing center. It is found in the centrosome. The chain is Proline and serine-rich protein 3 (Proser3) from Mus musculus (Mouse).